The following is a 187-amino-acid chain: Elongation factor P (187 aa).

This sequence belongs to the elongation factor P family.

It is found in the cytoplasm. It participates in protein biosynthesis; polypeptide chain elongation. In terms of biological role, involved in peptide bond synthesis. Stimulates efficient translation and peptide-bond synthesis on native or reconstituted 70S ribosomes in vitro. Probably functions indirectly by altering the affinity of the ribosome for aminoacyl-tRNA, thus increasing their reactivity as acceptors for peptidyl transferase. The chain is Elongation factor P from Bifidobacterium animalis subsp. lactis (strain AD011).